The primary structure comprises 1939 residues: Myosin heavy chain, skeletal muscle, adult (1939 aa).

Residue A2 is modified to N-acetylalanine. One can recognise a Myosin N-terminal SH3-like domain in the interval 34 to 83 (DAKSSVFVVHPKESFVKGTIQSKEGGKVTVKTEGGETLTVKEDQVFSMNP). K36 is subject to N6-methyllysine. The Myosin motor domain occupies 87-781 (DKIEDMAMMT…LLGLLEEMRD (695 aa)). K131 bears the N6,N6,N6-trimethyllysine mark. Residue 180 to 187 (GESGAGKT) coordinates ATP. An N6,N6,N6-trimethyllysine modification is found at K552. Residues 658 to 680 (LNKLMANLRSTHPHFVRCIIPNE) are actin-binding. H756 bears the Pros-methylhistidine mark. An actin-binding region spans residues 760–774 (RFGHTKVFFKAGLLG). Residues 784 to 813 (LAEIITRTQARCRGFLMRVEYRRMVERRES) enclose the IQ domain. A hinge region spans residues 839 to 841 (IKP). A coiled-coil region spans residues 842–1939 (LLKSAESEKE…IHGKKIEEEE (1098 aa)).

Belongs to the TRAFAC class myosin-kinesin ATPase superfamily. Myosin family. Muscle myosin is a hexameric protein that consists of 2 heavy chain subunits (MHC), 2 alkali light chain subunits (MLC) and 2 regulatory light chain subunits (MLC-2).

The protein resides in the cytoplasm. The protein localises to the myofibril. Muscle contraction. Myosin is a protein that binds to F-actin and has ATPase activity that is activated by F-actin. The sequence is that of Myosin heavy chain, skeletal muscle, adult from Gallus gallus (Chicken).